The chain runs to 91 residues: DNA/RNA-binding protein Alba (91 aa).

This sequence belongs to the histone-like Alba family.

Its subcellular location is the cytoplasm. It localises to the chromosome. Binds double-stranded DNA tightly but without sequence specificity. Involved in DNA compaction. The chain is DNA/RNA-binding protein Alba from Methanoculleus marisnigri (strain ATCC 35101 / DSM 1498 / JR1).